We begin with the raw amino-acid sequence, 343 residues long: Aspartate carbamoyltransferase catalytic subunit (343 aa).

The carbamoyl phosphate site is built by Arg91 and Thr92. Lys119 contacts L-aspartate. Residues Arg141, His171, and Gln174 each coordinate carbamoyl phosphate. Arg204 and Arg259 together coordinate L-aspartate. Residues Gly300 and Pro301 each coordinate carbamoyl phosphate.

The protein belongs to the aspartate/ornithine carbamoyltransferase superfamily. ATCase family. In terms of assembly, heterododecamer (2C3:3R2) of six catalytic PyrB chains organized as two trimers (C3), and six regulatory PyrI chains organized as three dimers (R2).

It catalyses the reaction carbamoyl phosphate + L-aspartate = N-carbamoyl-L-aspartate + phosphate + H(+). It functions in the pathway pyrimidine metabolism; UMP biosynthesis via de novo pathway; (S)-dihydroorotate from bicarbonate: step 2/3. In terms of biological role, catalyzes the condensation of carbamoyl phosphate and aspartate to form carbamoyl aspartate and inorganic phosphate, the committed step in the de novo pyrimidine nucleotide biosynthesis pathway. This Burkholderia mallei (strain NCTC 10247) protein is Aspartate carbamoyltransferase catalytic subunit.